The following is a 127-amino-acid chain: Glycine cleavage system H protein (127 aa).

The 83-residue stretch at 22-104 (EAVIGITQFA…YTDGWMVRVK (83 aa)) folds into the Lipoyl-binding domain. Lys-63 is modified (N6-lipoyllysine).

The protein belongs to the GcvH family. As to quaternary structure, the glycine cleavage system is composed of four proteins: P, T, L and H. (R)-lipoate is required as a cofactor.

The glycine cleavage system catalyzes the degradation of glycine. The H protein shuttles the methylamine group of glycine from the P protein to the T protein. This Nitratidesulfovibrio vulgaris (strain DSM 19637 / Miyazaki F) (Desulfovibrio vulgaris) protein is Glycine cleavage system H protein.